A 206-amino-acid chain; its full sequence is Large ribosomal subunit protein uL4 (206 aa).

It belongs to the universal ribosomal protein uL4 family. Part of the 50S ribosomal subunit.

In terms of biological role, one of the primary rRNA binding proteins, this protein initially binds near the 5'-end of the 23S rRNA. It is important during the early stages of 50S assembly. It makes multiple contacts with different domains of the 23S rRNA in the assembled 50S subunit and ribosome. Forms part of the polypeptide exit tunnel. This Afipia carboxidovorans (strain ATCC 49405 / DSM 1227 / KCTC 32145 / OM5) (Oligotropha carboxidovorans) protein is Large ribosomal subunit protein uL4.